Consider the following 385-residue polypeptide: Acyl-CoA dehydrogenase IpdE1 (385 aa).

FAD-binding positions include 126-129 (QGYS) and S161. E244 (proton acceptor) is an active-site residue. 364–366 (SNE) contacts FAD.

Belongs to the acyl-CoA dehydrogenase family. In terms of assembly, heterotetramer composed of 2 IpdE1 subunits and 2 IpdE2 subunits. FAD is required as a cofactor.

The enzyme catalyses 3-[(3aS,4S,5R,7aS)-5-hydroxy-7a-methyl-1-oxo-octahydro-1H-inden-4-yl]propanoyl-CoA + A = (2E)-3-[(3aS,4S,5R,7aS)-5-hydroxy-7a-methyl-1-oxo-octahydro-1H-inden-4-yl]prop-2-enoyl-CoA + AH2. The protein operates within steroid metabolism; cholesterol degradation. Functionally, involved in cholesterol degradation. Catalyzes the dehydrogenation of 5OH-HIP-CoA to 5OH-HIPE-CoA. Can also use octanoyl-CoA and dihydroferuloyl-CoA, with lower efficiency. Cannot use 3-oxo-4-pregnene-20-carboxyl-CoA (3-OPC-CoA). The protein is Acyl-CoA dehydrogenase IpdE1 of Mycobacterium tuberculosis (strain ATCC 25618 / H37Rv).